The following is a 413-amino-acid chain: 1-deoxy-D-xylulose 5-phosphate reductoisomerase (413 aa).

Residues threonine 13, glycine 14, serine 15, isoleucine 16, lysine 40, asparagine 41, and asparagine 127 each contribute to the NADPH site. Lysine 128 contributes to the 1-deoxy-D-xylulose 5-phosphate binding site. NADPH is bound at residue glutamate 129. Position 153 (aspartate 153) interacts with Mn(2+). 4 residues coordinate 1-deoxy-D-xylulose 5-phosphate: serine 154, glutamate 155, serine 184, and histidine 207. Residue glutamate 155 coordinates Mn(2+). Glycine 213 contacts NADPH. Residues serine 220, asparagine 225, lysine 226, and glutamate 229 each coordinate 1-deoxy-D-xylulose 5-phosphate. Glutamate 229 contacts Mn(2+).

Belongs to the DXR family. Mg(2+) is required as a cofactor. It depends on Mn(2+) as a cofactor.

The enzyme catalyses 2-C-methyl-D-erythritol 4-phosphate + NADP(+) = 1-deoxy-D-xylulose 5-phosphate + NADPH + H(+). It participates in isoprenoid biosynthesis; isopentenyl diphosphate biosynthesis via DXP pathway; isopentenyl diphosphate from 1-deoxy-D-xylulose 5-phosphate: step 1/6. Functionally, catalyzes the NADPH-dependent rearrangement and reduction of 1-deoxy-D-xylulose-5-phosphate (DXP) to 2-C-methyl-D-erythritol 4-phosphate (MEP). This chain is 1-deoxy-D-xylulose 5-phosphate reductoisomerase, found in Nitrosomonas eutropha (strain DSM 101675 / C91 / Nm57).